Reading from the N-terminus, the 1174-residue chain is Male determiner protein Mdmd(V) (1174 aa).

Over residues 1–15 (MNATDAESRKPENKP) the composition is skewed to basic and acidic residues. 3 disordered regions span residues 1 to 51 (MNAT…SGQR), 79 to 110 (RKDG…PVEL), and 136 to 259 (KQLS…LRRS). Positions 16–35 (SSESSSSGSTSGSSDGEVSS) are enriched in low complexity. Residues 36–47 (KTYFKNNKSKVL) show a composition bias toward polar residues. Basic and acidic residues predominate over residues 79–92 (RKDGSNEMLPKEDS). A compositionally biased stretch (polar residues) spans 93 to 102 (INTNHNYTTD). A compositionally biased stretch (low complexity) spans 138–153 (LSAYRSRSRSTRLSYS). Residues 167–180 (SRYKKSVLRSRRTS) show a composition bias toward basic residues. Residues 183-200 (HGRDSSTTKRSVSRDKDN) are compositionally biased toward basic and acidic residues. Over residues 201–223 (RLRRRIGSSRSHTRSHSRFRRSE) the composition is skewed to basic residues. Over residues 235–259 (RSQERRHERRRSMSSDYERIALRRS) the composition is skewed to basic and acidic residues. Residues 348 to 531 (KKYIHGYINK…KVLFQVRRDG (184 aa)) form the MIF4G domain. A compositionally biased stretch (low complexity) spans 597 to 608 (DSDGSFGSGSNS). A disordered region spans residues 597–616 (DSDGSFGSGSNSETALSDCD). Positions 641-757 (ALRRTIYLTL…SWDVLDCIKL (117 aa)) constitute an MI domain. Residues 840–857 (SAPSSSSSSSLSSELSAP) are compositionally biased toward low complexity. Disordered stretches follow at residues 840–1045 (SAPS…SRTK) and 1095–1133 (RKDN…NHSR). The segment covering 869 to 909 (KKKHKGKNKKMTKKKNPSKKKEKTKKIVGKNKIAAKNKTIK) has biased composition (basic residues). Basic and acidic residues predominate over residues 910–924 (RRTDKDNSSSKDNFL). Positions 926-957 (SESSSNESISLDSLSSELFAPSSYSSSESSND) are enriched in low complexity. The span at 963–1001 (KHKGKNKKMTKKKNPSNKREKTKKKLSKNKKAPNKNTKK) shows a compositional bias: basic residues. Positions 1010 to 1020 (SSESSISESKS) are enriched in low complexity. Residues 1034-1045 (RKKRVTSKSRTK) are compositionally biased toward basic residues. Residues 1095–1118 (RKDNYGNRQNHEISQRHDSEIKRR) are compositionally biased toward basic and acidic residues. Over residues 1119-1130 (REERKKRHHEKN) the composition is skewed to basic residues.

The protein belongs to the CWC22 family. As to quaternary structure, component of the spliceosome C complex.

The protein resides in the nucleus speckle. Male determiner protein (M-factor) that controls male somatic sexual differentiation. Acts as a dominant factor that regulates the mRNA splicing of transformer (tra) and doublesex (dsx) transcripts and promotes expression of male splice forms of tra and dsx. Probably acts as a component of the spliceosome C complex required for mRNA splicing factor and exon-junction complex (EJC) assembly. Hinders eIF4AIII from non-specifically binding RNA and escorts it to the splicing machinery to promote EJC assembly on mature mRNAs. The sequence is that of Male determiner protein Mdmd(V) from Musca domestica (House fly).